A 685-amino-acid polypeptide reads, in one-letter code: Probable glucan endo-1,3-beta-glucosidase btgC (685 aa).

3 disordered regions span residues 1 to 96, 119 to 168, and 180 to 202; these read MSGP…NLGP, GIDA…RDSY, and PAGQLTPGGSNPSQRSLFDSPYQ. The Cytoplasmic portion of the chain corresponds to 1-312; the sequence is MSGPHRSFSF…PTPGGGSRKR (312 aa). Polar residues-rich tracts occupy residues 47–61 and 73–90; these read SARSQAMGSSPSSGF and GQNSGHTQAMRTNSTTPG. The helical; Signal-anchor for type II membrane protein transmembrane segment at 313–333 threads the bilayer; sequence GWIVGLALAFIVVGAIVGGAV. Residues 334-685 are Extracellular-facing; it reads GGTLGNRENE…IPDCGGKTAA (352 aa). Positions 335–369 are disordered; it reads GTLGNRENEAPDTTKSASSDTESNGDLNKDSSEIK. A compositionally biased stretch (polar residues) spans 345–360; it reads PDTTKSASSDTESNGD. N-linked (GlcNAc...) asparagine glycosylation is found at asparagine 405, asparagine 428, and asparagine 456. Glutamate 488 functions as the Proton donor in the catalytic mechanism. The active-site Nucleophile is the glutamate 587. The N-linked (GlcNAc...) asparagine glycan is linked to asparagine 632.

This sequence belongs to the glycosyl hydrolase 17 family.

It is found in the cell membrane. It carries out the reaction Hydrolysis of (1-&gt;3)-beta-D-glucosidic linkages in (1-&gt;3)-beta-D-glucans.. Its function is as follows. Glucanases play a role in cell expansion during growth, in cell-cell fusion during mating, and in spore release during sporulation. This enzyme may be involved in beta-glucan degradation. Active on laminarin and lichenan. This chain is Probable glucan endo-1,3-beta-glucosidase btgC (btgC), found in Aspergillus oryzae (strain ATCC 42149 / RIB 40) (Yellow koji mold).